A 195-amino-acid polypeptide reads, in one-letter code: MTITKRKNTFYTSQFISYMKGYYLHPDIRGNLVAFTSDDDVWLMTLEDMKPIRVTSGQGVAIRPKISPDGKKIAYTIIWLRKGKGGGDIFITGNGETKRITFFGSMNTRVLGWLSDDEILVLTDFHTPFPQWSETYKININDGTMEKIPFGPISNIAISGDIIVIARGYQDLPFWKGYKGGTKGEFLISYDKGNT.

Belongs to the peptidase S41B family.

It is found in the cytoplasm. Functionally, degrades oligopeptides in a sequential manner. This chain is Putative Tricorn-like protease N-terminal subunit (triN), found in Sulfurisphaera tokodaii (strain DSM 16993 / JCM 10545 / NBRC 100140 / 7) (Sulfolobus tokodaii).